The following is a 522-amino-acid chain: MEELQGYFEKDGSRQQPFLYPLLFQEYIYALAHDRSLNGNGSIFYEPLEIFGYDSKSSLALVKRLITRIYQQHFFLSSVNYSKQNRFVGHHHTNFFYSRFYSQMISDGFGIIVEIPFSLQLVSYLKEKEIPKSHNLRSIHSIFPFLEDKLVHFNYVSDILIPHPIHMEILVQILQCWIQDVPLLHFLRFFLHEYHNWNSFFITQNNSIYLFSKETKRLFRFLYNSYVYECEFVFVFLRKHSSYLRFTSFRTFLERRYFYVKMEHLQTEHLIIVCCDYFNGTLWSFKDPFMHYARCQGKAILVSKGTHLLMKKWKYNFVNLWQYYFYFWYQSYRIHINQLSKHSFHFLGYLSSLLKNSSTVRNKILDNSFLIDTLTTKFDTAVPVIFLIVSLSKAQFCTVSGHPISKPIWTDLSDSGIIERFGRICRNLSHYHSGSSKKQGLYRIKYILRLSCARTLARKHKSTVRTFLQKLGSRLLEEFFTEGEQDLSLILPKAILFPFQGSHRERIWYLDIIRINHLVNRS.

It belongs to the intron maturase 2 family. MatK subfamily.

The protein resides in the plastid. It is found in the chloroplast. Functionally, usually encoded in the trnK tRNA gene intron. Probably assists in splicing its own and other chloroplast group II introns. The protein is Maturase K of Micranthus junceus (Micranthus plantagineus var. junceus).